Consider the following 203-residue polypeptide: Large ribosomal subunit protein bL25 (203 aa).

It belongs to the bacterial ribosomal protein bL25 family. CTC subfamily. As to quaternary structure, part of the 50S ribosomal subunit; part of the 5S rRNA/L5/L18/L25 subcomplex. Contacts the 5S rRNA. Binds to the 5S rRNA independently of L5 and L18.

Its function is as follows. This is one of the proteins that binds to the 5S RNA in the ribosome where it forms part of the central protuberance. In Rickettsia conorii (strain ATCC VR-613 / Malish 7), this protein is Large ribosomal subunit protein bL25.